The primary structure comprises 512 residues: Cobyric acid synthase (512 aa).

The 181-residue stretch at 262–442 (WLRVAAIRLP…WHGLLETDRF (181 aa)) folds into the GATase cobBQ-type domain. The active-site Nucleophile is Cys-343. The active site involves His-434.

The protein belongs to the CobB/CobQ family. CobQ subfamily.

It functions in the pathway cofactor biosynthesis; adenosylcobalamin biosynthesis. Functionally, catalyzes amidations at positions B, D, E, and G on adenosylcobyrinic A,C-diamide. NH(2) groups are provided by glutamine, and one molecule of ATP is hydrogenolyzed for each amidation. This Rhodococcus jostii (strain RHA1) protein is Cobyric acid synthase.